Consider the following 196-residue polypeptide: Molybdenum cofactor guanylyltransferase (196 aa).

GTP-binding positions include 10–12 (LAG), Lys23, Asn51, Asp69, and Asp99. Mg(2+) is bound at residue Asp99.

The protein belongs to the MobA family. In terms of assembly, monomer. It depends on Mg(2+) as a cofactor.

The protein resides in the cytoplasm. The catalysed reaction is Mo-molybdopterin + GTP + H(+) = Mo-molybdopterin guanine dinucleotide + diphosphate. Its function is as follows. Transfers a GMP moiety from GTP to Mo-molybdopterin (Mo-MPT) cofactor (Moco or molybdenum cofactor) to form Mo-molybdopterin guanine dinucleotide (Mo-MGD) cofactor. In Shewanella baltica (strain OS185), this protein is Molybdenum cofactor guanylyltransferase.